The chain runs to 255 residues: 2-succinyl-6-hydroxy-2,4-cyclohexadiene-1-carboxylate synthase (255 aa).

The protein belongs to the AB hydrolase superfamily. MenH family. Monomer.

The catalysed reaction is 5-enolpyruvoyl-6-hydroxy-2-succinyl-cyclohex-3-ene-1-carboxylate = (1R,6R)-6-hydroxy-2-succinyl-cyclohexa-2,4-diene-1-carboxylate + pyruvate. It functions in the pathway quinol/quinone metabolism; 1,4-dihydroxy-2-naphthoate biosynthesis; 1,4-dihydroxy-2-naphthoate from chorismate: step 3/7. Its pathway is quinol/quinone metabolism; menaquinone biosynthesis. Catalyzes a proton abstraction reaction that results in 2,5-elimination of pyruvate from 2-succinyl-5-enolpyruvyl-6-hydroxy-3-cyclohexene-1-carboxylate (SEPHCHC) and the formation of 2-succinyl-6-hydroxy-2,4-cyclohexadiene-1-carboxylate (SHCHC). The chain is 2-succinyl-6-hydroxy-2,4-cyclohexadiene-1-carboxylate synthase from Serratia proteamaculans (strain 568).